Reading from the N-terminus, the 430-residue chain is Enolase (430 aa).

Glutamine 163 is a (2R)-2-phosphoglycerate binding site. The active-site Proton donor is the glutamate 205. Aspartate 242, glutamate 285, and aspartate 312 together coordinate Mg(2+). Residues lysine 337, arginine 366, serine 367, and lysine 388 each contribute to the (2R)-2-phosphoglycerate site. Lysine 337 (proton acceptor) is an active-site residue.

The protein belongs to the enolase family. Mg(2+) serves as cofactor.

Its subcellular location is the cytoplasm. The protein localises to the secreted. The protein resides in the cell surface. It catalyses the reaction (2R)-2-phosphoglycerate = phosphoenolpyruvate + H2O. The protein operates within carbohydrate degradation; glycolysis; pyruvate from D-glyceraldehyde 3-phosphate: step 4/5. Catalyzes the reversible conversion of 2-phosphoglycerate (2-PG) into phosphoenolpyruvate (PEP). It is essential for the degradation of carbohydrates via glycolysis. The polypeptide is Enolase (Bifidobacterium animalis subsp. lactis (strain AD011)).